The following is a 202-amino-acid chain: Recombination protein RecR (202 aa).

The C4-type zinc finger occupies 56–71 (CVVCGTVSDKEHCRIC). Residues 79-179 (TVICVVEEPK…TVSRLASGLP (101 aa)) enclose the Toprim domain.

It belongs to the RecR family.

Its function is as follows. May play a role in DNA repair. It seems to be involved in an RecBC-independent recombinational process of DNA repair. It may act with RecF and RecO. This Rhodococcus jostii (strain RHA1) protein is Recombination protein RecR.